Reading from the N-terminus, the 1194-residue chain is Chitin synthase C (1194 aa).

2 disordered regions span residues 1-91 (MSLP…PNYL) and 136-177 (GAHG…RRKA). A compositionally biased stretch (basic and acidic residues) spans 12-23 (PRREETSAFREP). A compositionally biased stretch (basic residues) spans 42-54 (PRHHRHHRSHSSR). Basic and acidic residues-rich tracts occupy residues 55-69 (HQHDIDEERAEEGGI) and 76-85 (VKPERGRMDP). Residues 150-164 (TRHRSKKRKGSRKIS) show a composition bias toward basic residues. Residues 221 to 241 (IGLISIILMIAAFVGFLTFGF) form a helical membrane-spanning segment. N-linked (GlcNAc...) asparagine glycosylation is found at Asn351 and Asn390. Residues 476–496 (YVSLIFILSIVIVKFAFALLF) form a helical membrane-spanning segment. N-linked (GlcNAc...) asparagine glycans are attached at residues Asn582, Asn608, Asn885, and Asn1014. 3 helical membrane-spanning segments follow: residues 1039 to 1059 (FVIFVELVGTVVLPAAISFTI), 1073 to 1093 (IIPLVLLALILGLPGVLVVVT), and 1097 to 1117 (LVYVLWMLVYLISLPIWNFVL).

The protein belongs to the chitin synthase family. Class V subfamily.

It localises to the cell membrane. The catalysed reaction is [(1-&gt;4)-N-acetyl-beta-D-glucosaminyl](n) + UDP-N-acetyl-alpha-D-glucosamine = [(1-&gt;4)-N-acetyl-beta-D-glucosaminyl](n+1) + UDP + H(+). Functionally, polymerizes chitin, a structural polymer of the cell wall and septum, by transferring the sugar moiety of UDP-GlcNAc to the non-reducing end of the growing chitin polymer. Responsible for synthesis of 30-40% of the chitin in the cells. ChsA and chsD play redundant functions in conidia formation. The chitin synthesized by the chsD-encoded isozyme contributes to the rigidity of the walls of germinating conidia, of the subapical region of hyphae, and of conidiophore vesicles, but is not necessary for normal morphology of these cells. The chain is Chitin synthase C from Emericella nidulans (strain FGSC A4 / ATCC 38163 / CBS 112.46 / NRRL 194 / M139) (Aspergillus nidulans).